Consider the following 155-residue polypeptide: Ribosome maturation factor RimP (155 aa).

Belongs to the RimP family.

It localises to the cytoplasm. In terms of biological role, required for maturation of 30S ribosomal subunits. This chain is Ribosome maturation factor RimP, found in Synechococcus sp. (strain CC9605).